Consider the following 190-residue polypeptide: MSTVGTGKLTRAQRRAAARKNKRNTRVVQPVIVEPIASGQGKAIKAWTGYSVSKWTASCAAAEAKVTSAITISLPNELSSERNKQLKVGRVLLWLGLLPSVSGTVKSCVTETQTTAAASFQVALAVADNSKDVVAAMYPEAFKGITLEQLTADLTIYLYSSAALTEGDVIVHLEVEHVRPTFDDSFTPVY.

The tract at residues Met-1 to Asn-24 is disordered. Ser-2 is modified (N-acetylserine; by host). Over residues Arg-11–Asn-24 the composition is skewed to basic residues.

The protein belongs to the bromovirus capsid protein family.

It localises to the virion. Its function is as follows. Capsid protein. Probably binds RNA and plays a role in packaging. The sequence is that of Capsid protein from Cowpea chlorotic mottle virus (CCMV).